We begin with the raw amino-acid sequence, 185 residues long: ATP synthase subunit b, chloroplastic (185 aa).

The chain crosses the membrane as a helical span at residues 31–49 (LINSGVVLGLPVYSGKGVL).

This sequence belongs to the ATPase B chain family. F-type ATPases have 2 components, F(1) - the catalytic core - and F(0) - the membrane proton channel. F(1) has five subunits: alpha(3), beta(3), gamma(1), delta(1), epsilon(1). F(0) has four main subunits: a(1), b(1), b'(1) and c(10-14). The alpha and beta chains form an alternating ring which encloses part of the gamma chain. F(1) is attached to F(0) by a central stalk formed by the gamma and epsilon chains, while a peripheral stalk is formed by the delta, b and b' chains.

It localises to the plastid. The protein localises to the chloroplast thylakoid membrane. Its function is as follows. F(1)F(0) ATP synthase produces ATP from ADP in the presence of a proton or sodium gradient. F-type ATPases consist of two structural domains, F(1) containing the extramembraneous catalytic core and F(0) containing the membrane proton channel, linked together by a central stalk and a peripheral stalk. During catalysis, ATP synthesis in the catalytic domain of F(1) is coupled via a rotary mechanism of the central stalk subunits to proton translocation. Functionally, component of the F(0) channel, it forms part of the peripheral stalk, linking F(1) to F(0). The polypeptide is ATP synthase subunit b, chloroplastic (Huperzia lucidula (Shining clubmoss)).